We begin with the raw amino-acid sequence, 164 residues long: Phosphopantetheine adenylyltransferase (164 aa).

Ser-9 contacts substrate. Residues 9–10 (SF) and His-17 each bind ATP. Substrate contacts are provided by Lys-41, Leu-73, and Lys-87. Residues 88 to 90 (GLR), Glu-98, and 123 to 129 (YSYISSS) each bind ATP.

This sequence belongs to the bacterial CoaD family. As to quaternary structure, homohexamer. It depends on Mg(2+) as a cofactor.

Its subcellular location is the cytoplasm. It catalyses the reaction (R)-4'-phosphopantetheine + ATP + H(+) = 3'-dephospho-CoA + diphosphate. The protein operates within cofactor biosynthesis; coenzyme A biosynthesis; CoA from (R)-pantothenate: step 4/5. In terms of biological role, reversibly transfers an adenylyl group from ATP to 4'-phosphopantetheine, yielding dephospho-CoA (dPCoA) and pyrophosphate. In Clostridium perfringens (strain 13 / Type A), this protein is Phosphopantetheine adenylyltransferase.